Consider the following 1270-residue polypeptide: DNA-directed RNA polymerase subunit beta (1270 aa).

Belongs to the RNA polymerase beta chain family. The RNAP catalytic core consists of 2 alpha, 1 beta, 1 beta' and 1 omega subunit. When a sigma factor is associated with the core the holoenzyme is formed, which can initiate transcription.

The catalysed reaction is RNA(n) + a ribonucleoside 5'-triphosphate = RNA(n+1) + diphosphate. Its function is as follows. DNA-dependent RNA polymerase catalyzes the transcription of DNA into RNA using the four ribonucleoside triphosphates as substrates. The sequence is that of DNA-directed RNA polymerase subunit beta from Bacteroides fragilis (strain ATCC 25285 / DSM 2151 / CCUG 4856 / JCM 11019 / LMG 10263 / NCTC 9343 / Onslow / VPI 2553 / EN-2).